The primary structure comprises 3013 residues: Protein furry homolog-like (3013 aa).

Position 2 is an N-acetylserine (Ser-2). The segment at 90 to 109 (DESYEYRPRSSTKSKGDEQQ) is disordered. Ser-844 carries the phosphoserine modification. Disordered regions lie at residues 878 to 897 (SSST…LAST) and 1476 to 1498 (VTSG…PDNK). The span at 1476 to 1486 (VTSGTTSSSNT) shows a compositional bias: low complexity. A phosphoserine mark is found at Ser-1914, Ser-1935, Ser-1941, Ser-1945, and Ser-1957. Thr-1959 carries the post-translational modification Phosphothreonine. Ser-1978, Ser-2272, and Ser-2454 each carry phosphoserine. The tract at residues 2459 to 2492 (DKGDTPSLQEYQCSSSTPSLNLTNQEDTDESSEE) is disordered. Residues 2464–2483 (PSLQEYQCSSSTPSLNLTNQ) show a composition bias toward polar residues. Ser-2499 carries the phosphoserine modification. Disordered stretches follow at residues 2508 to 2567 (LNSD…DTTS) and 2636 to 2660 (EEEA…EVQT). 2 stretches are compositionally biased toward polar residues: residues 2528–2539 (SEDSTGSITTEE) and 2555–2567 (DNAN…DTTS).

This sequence belongs to the furry protein family. In terms of tissue distribution, widely expressed with higher expression in colon, placenta, brain and cells of lymphoid origin.

Its function is as follows. Plays a key role in maintaining the integrity of polarized cell extensions during morphogenesis, regulates the actin cytoskeleton and plays a key role in patterning sensory neuron dendritic fields by promoting avoidance between homologous dendrites as well as by limiting dendritic branching. May function as a transcriptional activator. In Homo sapiens (Human), this protein is Protein furry homolog-like (FRYL).